The sequence spans 184 residues: UPF0215 protein MJ1150 (184 aa).

This sequence belongs to the UPF0215 family.

The chain is UPF0215 protein MJ1150 from Methanocaldococcus jannaschii (strain ATCC 43067 / DSM 2661 / JAL-1 / JCM 10045 / NBRC 100440) (Methanococcus jannaschii).